Consider the following 30-residue polypeptide: Photosystem I reaction center subunit XII (30 aa).

The chain crosses the membrane as a helical span at residues 7 to 26; it reads IMVALFAALFTGILALRLGT.

The protein belongs to the PsaM family.

It is found in the plastid. Its subcellular location is the chloroplast thylakoid membrane. The chain is Photosystem I reaction center subunit XII from Mesostigma viride (Green alga).